The chain runs to 570 residues: MSQDAAIAEQTPVEHLSAVDSASHSVLSTPSNKAERDEIKAYGEGEEHEPVVEIPKRPASAYVTVSIMCIMIAFGGFVFGWDTGTISGFINQTDFIRRFGMKHKDGTNYLSKVRTGLIVSIFNIGCAIGGIILSKLGDMYGRKVGLIVVVVIYIIGIIIQIASINKWYQYFIGRIISGLGVGGIAVLSPMLISEVSPKHLRGTLVSCYQLMITAGIFLGYCTNFGTKNYSNSVQWRVPLGLCFAWALFMIGGMTFVPESPRYLAEVGKIEEAKRSIAVSNKVAVDDPSVLAEVEAVLAGVEAEKLAGNASWGELFSSKTKVLQRLIMGAMIQSLQQLTGDNYFFYYGTTIFKAVGLSDSFETSIVLGIVNFASTFVGIYVVERYGRRTCLLWGAASMTACMVVYASVGVTRLWPNGQDQPSSKGAGNCMIVFACFYIFCFATTWAPIPYVVVSETFPLRVKSKAMSIATAANWLWGFLIGFFTPFITGAINFYYGYVFMGCLVFMFFYVLLVVPETKGLTLEEVNTMWEEGVLPWKSASWVPPSRRGANYDAEEMTHDDKPLYKRMFSTK.

At 1-60 the chain is on the cytoplasmic side; the sequence is MSQDAAIAEQTPVEHLSAVDSASHSVLSTPSNKAERDEIKAYGEGEEHEPVVEIPKRPAS. Residues 61 to 81 traverse the membrane as a helical segment; that stretch reads AYVTVSIMCIMIAFGGFVFGW. Topologically, residues 82 to 116 are extracellular; it reads DTGTISGFINQTDFIRRFGMKHKDGTNYLSKVRTG. N-linked (GlcNAc...) asparagine glycosylation is present at asparagine 91. A helical transmembrane segment spans residues 117–137; that stretch reads LIVSIFNIGCAIGGIILSKLG. The Cytoplasmic portion of the chain corresponds to 138–143; the sequence is DMYGRK. A helical membrane pass occupies residues 144–164; it reads VGLIVVVVIYIIGIIIQIASI. At 165–174 the chain is on the extracellular side; the sequence is NKWYQYFIGR. The helical transmembrane segment at 175 to 195 threads the bilayer; that stretch reads IISGLGVGGIAVLSPMLISEV. The Cytoplasmic portion of the chain corresponds to 196 to 201; sequence SPKHLR. A helical membrane pass occupies residues 202-222; that stretch reads GTLVSCYQLMITAGIFLGYCT. The Extracellular segment spans residues 223-236; sequence NFGTKNYSNSVQWR. An N-linked (GlcNAc...) asparagine glycan is attached at asparagine 228. Residues 237-257 form a helical membrane-spanning segment; sequence VPLGLCFAWALFMIGGMTFVP. Residues 258–340 are Cytoplasmic-facing; that stretch reads ESPRYLAEVG…IQSLQQLTGD (83 aa). Residues 341–357 traverse the membrane as a helical segment; the sequence is NYFFYYGTTIFKAVGLS. The Extracellular segment spans residues 358–363; the sequence is DSFETS. A helical transmembrane segment spans residues 364–381; the sequence is IVLGIVNFASTFVGIYVV. Topologically, residues 382–388 are cytoplasmic; the sequence is ERYGRRT. Residues 389–409 form a helical membrane-spanning segment; that stretch reads CLLWGAASMTACMVVYASVGV. At 410 to 431 the chain is on the extracellular side; sequence TRLWPNGQDQPSSKGAGNCMIV. Residues 432–452 form a helical membrane-spanning segment; that stretch reads FACFYIFCFATTWAPIPYVVV. The Cytoplasmic segment spans residues 453–469; that stretch reads SETFPLRVKSKAMSIAT. The chain crosses the membrane as a helical span at residues 470-490; sequence AANWLWGFLIGFFTPFITGAI. Position 491 (asparagine 491) is a topological domain, extracellular. The chain crosses the membrane as a helical span at residues 492–512; it reads FYYGYVFMGCLVFMFFYVLLV. Residues 513–570 are Cytoplasmic-facing; sequence VPETKGLTLEEVNTMWEEGVLPWKSASWVPPSRRGANYDAEEMTHDDKPLYKRMFSTK. Threonine 556 is subject to Phosphothreonine. Residue lysine 560 forms a Glycyl lysine isopeptide (Lys-Gly) (interchain with G-Cter in ubiquitin) linkage.

The protein belongs to the major facilitator superfamily. Sugar transporter (TC 2.A.1.1) family.

It is found in the membrane. High-affinity glucose transporter. The chain is High-affinity hexose transporter HXT7 (HXT7) from Saccharomyces cerevisiae (strain ATCC 204508 / S288c) (Baker's yeast).